Here is an 82-residue protein sequence, read N- to C-terminus: Small ribosomal subunit protein bS16 (82 aa).

This sequence belongs to the bacterial ribosomal protein bS16 family.

In Crocosphaera subtropica (strain ATCC 51142 / BH68) (Cyanothece sp. (strain ATCC 51142)), this protein is Small ribosomal subunit protein bS16.